The following is a 402-amino-acid chain: Succinyl-diaminopimelate desuccinylase (402 aa).

Histidine 88 is a Zn(2+) binding site. The active site involves aspartate 90. Residue aspartate 121 coordinates Zn(2+). The Proton acceptor role is filled by glutamate 155. 3 residues coordinate Zn(2+): glutamate 156, glutamate 184, and histidine 374.

This sequence belongs to the peptidase M20A family. DapE subfamily. Homodimer. Zn(2+) serves as cofactor. Requires Co(2+) as cofactor.

The catalysed reaction is N-succinyl-(2S,6S)-2,6-diaminopimelate + H2O = (2S,6S)-2,6-diaminopimelate + succinate. The protein operates within amino-acid biosynthesis; L-lysine biosynthesis via DAP pathway; LL-2,6-diaminopimelate from (S)-tetrahydrodipicolinate (succinylase route): step 3/3. In terms of biological role, catalyzes the hydrolysis of N-succinyl-L,L-diaminopimelic acid (SDAP), forming succinate and LL-2,6-diaminopimelate (DAP), an intermediate involved in the bacterial biosynthesis of lysine and meso-diaminopimelic acid, an essential component of bacterial cell walls. The polypeptide is Succinyl-diaminopimelate desuccinylase (Psychrobacter sp. (strain PRwf-1)).